The chain runs to 169 residues: NAD(P)H-quinone oxidoreductase subunit J, chloroplastic (169 aa).

Belongs to the complex I 30 kDa subunit family. As to quaternary structure, NDH is composed of at least 16 different subunits, 5 of which are encoded in the nucleus.

It localises to the plastid. The protein localises to the chloroplast thylakoid membrane. It carries out the reaction a plastoquinone + NADH + (n+1) H(+)(in) = a plastoquinol + NAD(+) + n H(+)(out). The enzyme catalyses a plastoquinone + NADPH + (n+1) H(+)(in) = a plastoquinol + NADP(+) + n H(+)(out). In terms of biological role, NDH shuttles electrons from NAD(P)H:plastoquinone, via FMN and iron-sulfur (Fe-S) centers, to quinones in the photosynthetic chain and possibly in a chloroplast respiratory chain. The immediate electron acceptor for the enzyme in this species is believed to be plastoquinone. Couples the redox reaction to proton translocation, and thus conserves the redox energy in a proton gradient. The sequence is that of NAD(P)H-quinone oxidoreductase subunit J, chloroplastic from Zygnema circumcarinatum (Green alga).